The following is a 429-amino-acid chain: Phosphoribosylamine--glycine ligase (429 aa).

The ATP-grasp domain occupies 109 to 316; the sequence is KDFLARHQIP…LVDLCLAACD (208 aa). 135–196 provides a ligand contact to ATP; sequence LREKGAPIVI…EEFLDGEEAS (62 aa). Mg(2+) contacts are provided by Glu286 and Asn288.

The protein belongs to the GARS family. Monomer. Mg(2+) is required as a cofactor. The cofactor is Mn(2+).

The enzyme catalyses 5-phospho-beta-D-ribosylamine + glycine + ATP = N(1)-(5-phospho-beta-D-ribosyl)glycinamide + ADP + phosphate + H(+). The protein operates within purine metabolism; IMP biosynthesis via de novo pathway; N(1)-(5-phospho-D-ribosyl)glycinamide from 5-phospho-alpha-D-ribose 1-diphosphate: step 2/2. The protein is Phosphoribosylamine--glycine ligase of Salmonella typhimurium (strain LT2 / SGSC1412 / ATCC 700720).